The chain runs to 225 residues: Glucose-induced degradation protein 8 homolog (225 aa).

Positions 22–54 (QRAEMNRLIMDYLVTEGYKEAAEKFRIESGTQP) constitute a LisH domain. The CTLH domain occupies 60-117 (SLDDRIKIREAVQKGDLEQAVSMTNKLNPDILDSNQQLYFHLQQQRLIELIREKDIEA).

This sequence belongs to the GID8 family.

It is found in the cytoplasm. It localises to the nucleus. Core component of the CTLH E3 ubiquitin-protein ligase complex that mediates ubiquitination and subsequent proteasomal degradation of target proteins. Acts as a positive regulator of Wnt signaling pathway by promoting beta-catenin (CTNNB1) nuclear accumulation. In Nematostella vectensis (Starlet sea anemone), this protein is Glucose-induced degradation protein 8 homolog.